We begin with the raw amino-acid sequence, 337 residues long: GTPase Obg (337 aa).

The 159-residue stretch at 4-162 (SNFIDYVKVC…AWVILELKVL (159 aa)) folds into the Obg domain. An OBG-type G domain is found at 163 to 329 (ADVGLVGFPN…LKDLLWTTMN (167 aa)). GTP-binding positions include 169–176 (GFPNAGKS), 194–198 (FTTLA), 216–219 (DIPG), 283–286 (SKSD), and 310–312 (SSY). The Mg(2+) site is built by serine 176 and threonine 196.

The protein belongs to the TRAFAC class OBG-HflX-like GTPase superfamily. OBG GTPase family. In terms of assembly, monomer. Mg(2+) serves as cofactor.

The protein resides in the cytoplasm. An essential GTPase which binds GTP, GDP and possibly (p)ppGpp with moderate affinity, with high nucleotide exchange rates and a fairly low GTP hydrolysis rate. Plays a role in control of the cell cycle, stress response, ribosome biogenesis and in those bacteria that undergo differentiation, in morphogenesis control. The protein is GTPase Obg of Cytophaga hutchinsonii (strain ATCC 33406 / DSM 1761 / CIP 103989 / NBRC 15051 / NCIMB 9469 / D465).